The following is a 631-amino-acid chain: MGILAKIEQPRDLKGLTYPELEQLAQEIRAEMIDVVSANGGHLAPNLGVVELTLALHRVFDSPKDKIIWDVGHQSYVHKLVTGRQKEFKSLRLYKGLSGFPKRCESPHDCFETGHSSTSISAAVGFAKARDLRKEKNQVVAVIGDGAMTGGMAFEALNHAGHTKTNMIVVLNDNEMAIAQNVGAMSSYLNRLRTDPRYDRSKDEIENLLKRIPGIGSKMAKAAEKAKDSLKYLLVPGLLFEEMGFTYLGPVNGHDQIALEQVFEQAKMVKEPVLVHVLTQKGRGYEPSEKNPALFHGVGPFNKVTGEVIKKPAPPTYTQVFGEALCELAEKDPRITAITAAMPSGTGLNLFAQKFPDRFFDVGIAEQHAVTFSAALAFGGMKPVVSIYSTFYQRAYDQVLHDVCLPHANVVMAIDRAGVVGDDGPTHHGVFDISFLRVIPNLVFMAPKDENELRHMLYTSLQLDGPVALRYPRSVGQGVELTEELRELPVGKAEILQEGKDITLIGVGPMVYTCLAAAVELRHRGVEATVINLRYINPLDRESILRYARMTKRIITVEDHMLAGGMGSAVMEVLGDEGLTDVVVERLGYDEYVDQGAISLLHQGYGLSVVGILKAAERLKVLQRIEGRSSV.

Thiamine diphosphate contacts are provided by residues histidine 73 and 114-116 (GHS). A Mg(2+)-binding site is contributed by aspartate 145. Residues 146-147 (GA), asparagine 174, tyrosine 285, and glutamate 366 contribute to the thiamine diphosphate site. Asparagine 174 provides a ligand contact to Mg(2+).

It belongs to the transketolase family. DXPS subfamily. Homodimer. Requires Mg(2+) as cofactor. The cofactor is thiamine diphosphate.

It carries out the reaction D-glyceraldehyde 3-phosphate + pyruvate + H(+) = 1-deoxy-D-xylulose 5-phosphate + CO2. It participates in metabolic intermediate biosynthesis; 1-deoxy-D-xylulose 5-phosphate biosynthesis; 1-deoxy-D-xylulose 5-phosphate from D-glyceraldehyde 3-phosphate and pyruvate: step 1/1. In terms of biological role, catalyzes the acyloin condensation reaction between C atoms 2 and 3 of pyruvate and glyceraldehyde 3-phosphate to yield 1-deoxy-D-xylulose-5-phosphate (DXP). This is 1-deoxy-D-xylulose-5-phosphate synthase from Desulfitobacterium hafniense (strain DSM 10664 / DCB-2).